We begin with the raw amino-acid sequence, 460 residues long: MASLLQSDRVVYLVQGEKKVRAPLSQLYFCRYCSELRSLECVSHEVDSHYCPSCLENMPSAEAKLKKNRCANCFDCPGCMHTLSTRATSISTQLPDDPAKTTMKKAYYLACGFCRWTSRDVGMADKSVASGGWQEPENPHTQRMNKLIEYYQQLAQKEKVERDRKKLARRRNYMPLAFSDKYGLGTRLQRPRAGASISTLAGLSLKEGEDQKEIKIEPAQAVDEVEPLPEDYYTRPVNLTEVTTLQQRLLQPDFQPVCASQLYPRHKHLLIKRSLRCRKCEHNLSKPEFNPTSIKFKIQQVAVNYIPEVRIMSIPNLRYMKESQVLLTLTNPVENLTHVTLLECEEGDPDNTNSTAKVVVPPKELVLAGKDAAAEYDELAEPQDFQDDPDIIAFRKANKVGIFIKVTPQREEGEVTVCFKMKHDFKNLAAPIRPIEESDQGTEVIWLTQHVELSLGPLLP.

N-acetylalanine is present on Ala-2. Residues 152-172 are a coiled coil; that stretch reads QQLAQKEKVERDRKKLARRRN. Ser-196 bears the Phosphoserine mark. Lys-215 participates in a covalent cross-link: Glycyl lysine isopeptide (Lys-Gly) (interchain with G-Cter in SUMO2). At Thr-407 the chain carries Phosphothreonine.

It belongs to the dynactin subunit 4 family. In terms of assembly, subunit of dynactin, a multiprotein complex part of a tripartite complex with dynein and a adapter, such as BICDL1, BICD2 or HOOK3. The dynactin complex is built around ACTR1A/ACTB filament and consists of an actin-related filament composed of a shoulder domain, a pointed end and a barbed end. Its length is defined by its flexible shoulder domain. The soulder is composed of 2 DCTN1 subunits, 4 DCTN2 and 2 DCTN3. The 4 DCNT2 (via N-terminus) bind the ACTR1A filament and act as molecular rulers to determine the length. The pointed end is important for binding dynein-dynactin cargo adapters. Consists of 4 subunits: ACTR10, DCNT4, DCTN5 and DCTN6. The barbed end is composed of a CAPZA1:CAPZB heterodimers, which binds ACTR1A/ACTB filament and dynactin and stabilizes dynactin. Interacts with ATP7B, but not ATP7A, in a copper-dependent manner. Interacts with ANK2; this interaction is required for localization at costameres. Interacts with N4BP2L1.

Its subcellular location is the cytoplasm. It is found in the cytoskeleton. The protein localises to the microtubule organizing center. The protein resides in the centrosome. It localises to the stress fiber. Its subcellular location is the cell cortex. It is found in the myofibril. The protein localises to the sarcomere. Functionally, part of the dynactin complex that activates the molecular motor dynein for ultra-processive transport along microtubules. The sequence is that of Dynactin subunit 4 (DCTN4) from Pongo abelii (Sumatran orangutan).